Reading from the N-terminus, the 174-residue chain is Granulocyte colony-stimulating factor (174 aa).

Cystine bridges form between cysteine 36–cysteine 42 and cysteine 64–cysteine 74. An O-linked (GalNAc...) threonine glycan is attached at threonine 133.

Belongs to the IL-6 superfamily. In terms of assembly, monomer. O-glycosylated.

The protein resides in the secreted. Functionally, granulocyte/macrophage colony-stimulating factors are cytokines that act in hematopoiesis by controlling the production, differentiation, and function of 2 related white cell populations of the blood, the granulocytes and the monocytes-macrophages. This CSF induces granulocytes. In Ovis aries (Sheep), this protein is Granulocyte colony-stimulating factor (CSF3).